A 61-amino-acid polypeptide reads, in one-letter code: Potassium channel toxin alpha-KTx 6.9 (61 aa).

The first 23 residues, methionine 1 to glycine 23, serve as a signal peptide directing secretion. 4 disulfides stabilise this stretch: cysteine 29-cysteine 50, cysteine 35-cysteine 55, cysteine 39-cysteine 57, and cysteine 45-cysteine 60.

The protein belongs to the short scorpion toxin superfamily. Potassium channel inhibitor family. Alpha-KTx 06 subfamily. Expressed by the venom gland.

The protein resides in the secreted. Functionally, inhibits Kv1.2/KCNA2 and Kv1.3/KCNA3 voltage-gated potassium channels. This Opistophthalmus carinatus (African yellow leg scorpion) protein is Potassium channel toxin alpha-KTx 6.9.